We begin with the raw amino-acid sequence, 287 residues long: MTILVLGGRGKTASRLAALLDAAKTPFLVGSSSTSQESPYNSSHFNWYEKTTWDNPFAEIGKHGLQPISAVYLVGPPTMDMVPPMIQFVDLACSKGVQRFVLVSASNIEKGDHSMGQVHAYLDSLPGVEYVALRPTWFMENLLEDPQRTWIKNESQVVSATGEGKIPFISADDIASVAFHCLTEWGSHKTEYIIQGPELLSYGQVAEILTSILGKKITHRSLSEAEYTNILVDEIGMPADFAAMSAAMEVDVKNSPQETLNGSVEEVTGNPPRFFRTFAEHEKQKWV.

The protein belongs to the fgaFS/easG family.

The enzyme catalyses festuclavine + NAD(+) = 6,8-dimethyl-6,7-didehydroergoline + NADH + H(+). It participates in alkaloid biosynthesis; ergot alkaloid biosynthesis. Functionally, festuclavine synthase; part of the gene cluster that mediates the biosynthesis of isofumigaclavines, fungal ergot alkaloids. The tryptophan dimethylallyltransferase ifgA catalyzes the first step of ergot alkaloid biosynthesis by condensing dimethylallyl diphosphate (DMAP) and tryptophan to form 4-dimethylallyl-L-tryptophan. The second step is catalyzed by the methyltransferase ifgB that methylates 4-dimethylallyl-L-tryptophan in the presence of S-adenosyl-L-methionine, resulting in the formation of N-methyl-dimethylallyl-L-tryptophan. The catalase ifgD and the FAD-dependent oxidoreductase ifgC then transform N-methyl-dimethylallyl-L-tryptophan to chanoclavine-I which is further oxidized by ifgE in the presence of NAD(+), resulting in the formation of chanoclavine-I aldehyde. The chanoclavine-I aldehyde reductases ifgG and/or fgaOx3 reduce chanoclavine-I aldehyde to dihydrochanoclavine-I aldehyde that spontaneously dehydrates to form 6,8-dimethyl-6,7-didehydroergoline. The festuclavine dehydrogenases ifgF1 and/or ifgF2 then catalyze the reduction of 6,8-dimethyl-6,7-didehydroergoline to form festuclavine. Hydrolysis of festuclavine by a yet undetermined cytochrome P450 monooxygenase (called ifgH) then leads to the formation of isofumigaclavine B which is in turn acetylated by ifgI to isofumigaclavine A. Penicillium roqueforti has interestingly at least two sets of genes for the consumption of chanoclavine-I aldehyde on three different loci, the OYEs ifgG/fgaOx3 and the festuclavine synthase homologs ifgF1/ifgF2. The reason for the duplication of these genes is unclear, probably to ensure the conversion of chanoclavine-I aldehyde by differential gene expression under various environmental conditions. In Penicillium roqueforti (strain FM164), this protein is Festuclavine synthase I.